The primary structure comprises 330 residues: Inactive serine protease 45 (330 aa).

Positions 1–35 (MATSLRLLDAGPGSLRRWIPTCFAALLLLPPRPNL) are cleaved as a signal peptide. The Peptidase S1 domain maps to 45–291 (VCGAPWWSDS…YTGWIKEQVS (247 aa)). Cystine bridges form between Cys-75/Cys-91, Cys-172/Cys-249, Cys-207/Cys-230, and Cys-239/Cys-267. N-linked (GlcNAc...) asparagine glycosylation occurs at Asn-272.

It belongs to the peptidase S1 family.

The protein resides in the secreted. This chain is Inactive serine protease 45 (Prss45), found in Rattus norvegicus (Rat).